The primary structure comprises 641 residues: tRNA 5-methylaminomethyl-2-thiouridine biosynthesis bifunctional protein MnmC (641 aa).

The tract at residues 1–219 (MTVSKILKQI…PYPICSAAVT (219 aa)) is tRNA (mnm(5)s(2)U34)-methyltransferase. Residues 232–641 (IGGGVASACL…GKALEVGVEV (410 aa)) are FAD-dependent cmnm(5)s(2)U34 oxidoreductase.

The protein in the N-terminal section; belongs to the methyltransferase superfamily. tRNA (mnm(5)s(2)U34)-methyltransferase family. In the C-terminal section; belongs to the DAO family. Requires FAD as cofactor.

Its subcellular location is the cytoplasm. It catalyses the reaction 5-aminomethyl-2-thiouridine(34) in tRNA + S-adenosyl-L-methionine = 5-methylaminomethyl-2-thiouridine(34) in tRNA + S-adenosyl-L-homocysteine + H(+). Its function is as follows. Catalyzes the last two steps in the biosynthesis of 5-methylaminomethyl-2-thiouridine (mnm(5)s(2)U) at the wobble position (U34) in tRNA. Catalyzes the FAD-dependent demodification of cmnm(5)s(2)U34 to nm(5)s(2)U34, followed by the transfer of a methyl group from S-adenosyl-L-methionine to nm(5)s(2)U34, to form mnm(5)s(2)U34. This is tRNA 5-methylaminomethyl-2-thiouridine biosynthesis bifunctional protein MnmC from Shewanella pealeana (strain ATCC 700345 / ANG-SQ1).